We begin with the raw amino-acid sequence, 634 residues long: UPF0329 protein ECU07_1850/ECU10_0050 (634 aa).

2 stretches are compositionally biased toward basic and acidic residues: residues 354–365 and 397–407; these read REEREKREESKG and GESKEEDRGEE. The interval 354-438 is disordered; the sequence is REEREKREES…KGSGEKRISE (85 aa). The segment covering 408 to 417 has biased composition (acidic residues); sequence GGVEAEDPLE.

It belongs to the UPF0329 family.

This is UPF0329 protein ECU07_1850/ECU10_0050 from Encephalitozoon cuniculi (strain GB-M1) (Microsporidian parasite).